Reading from the N-terminus, the 743-residue chain is Zinc transporter ZIP6 (743 aa).

An N-terminal signal peptide occupies residues 1 to 20 (MARKLSVILILTFALSVTNP). The Extracellular segment spans residues 21-313 (LHELKAAAFP…PKTYSLQIAW (293 aa)). A glycan (N-linked (GlcNAc...) asparagine) is linked at Asn-67. Basic and acidic residues predominate over residues 96–116 (HEHHSDHEHHSDHEHHSDHEH). 2 disordered regions span residues 96-174 (HEHH…SASE) and 190-245 (LETI…SRNT). The segment covering 117–132 (HSHRNHAASGKNKRKA) has biased composition (basic residues). Basic and acidic residues-rich tracts occupy residues 133–147 (LCPDHDSDSSGKDPR) and 155–167 (HRSEHASGRRNVK). Residues 206-215 (VSSSTPPSVT) show a composition bias toward polar residues. Positions 227–237 (KTNESVSEPRK) are enriched in basic and acidic residues. Asn-229, Asn-254, and Asn-271 each carry an N-linked (GlcNAc...) asparagine glycan. Residues 314 to 334 (VGGFIAISIISFLSLLGVILV) traverse the membrane as a helical segment. Topologically, residues 335-343 (PLMNRVFFK) are cytoplasmic. Residues 344-364 (FLLSFLVALAVGTLSGDAFLH) form a helical membrane-spanning segment. Residues 365 to 411 (LLPHSHASHHHSHSHEEPAMEMKRGPLFSHLSSQNIEESAYFDSTWK) are Extracellular-facing. A helical transmembrane segment spans residues 412 to 432 (GLTALGGLYFMFLVEHVLTLI). Topologically, residues 433 to 645 (KQFKDKKKKN…LKAGMTVKQA (213 aa)) are cytoplasmic. Residues 452–474 (VEIKKQLSKYESQLSTNEEKVDT) adopt a coiled-coil conformation. Phosphoserine is present on residues Ser-459 and Ser-466. The chain crosses the membrane as a helical span at residues 646-666 (VLYNALSAMLAYLGMATGIFI). Residues 667–674 (GHYAENVS) lie on the Extracellular side of the membrane. Asn-672 is a glycosylation site (N-linked (GlcNAc...) asparagine). The chain crosses the membrane as a helical span at residues 675-695 (MWIFALTAGLFMYVALVDMVP). The Cytoplasmic portion of the chain corresponds to 696 to 712 (EMLHNDASDHGCSRWGY). Residues 713–733 (FFLQNAGMLLGFGIMLLISIF) form a helical membrane-spanning segment. Residues 734-743 (EHKIVFRINF) are Extracellular-facing.

This sequence belongs to the ZIP transporter (TC 2.A.5) family. Interacts with SLC39A10; which triggers cells to undergo EMT and mitosis. Found in a complex with SLC39A6, SLC39A10 and with the 'Ser-727' phosphorylated form of STAT3 throughout mitosis. Found in a complex with SLC39A6, SLC39A10 and with NCAM1; this complex controls NCAM1 phosphorylation and integration into focal adhesion complexes during epithelial-to-mesenchymal transition (EMT). Found in a complex with SLC39A6, SLC39A10 and with GSK3B that controls NCAM1 phosphorylation. Cleaved on the N-terminus before locating to the plasma membrane. In terms of processing, N-glycosylated. Post-translationally, phosphorylated by ZAP70 in response to TCR stimulation leading to its activation.

The protein localises to the cell membrane. Its subcellular location is the cell projection. It is found in the lamellipodium membrane. It localises to the membrane raft. The protein resides in the apical cell membrane. It carries out the reaction Zn(2+)(in) = Zn(2+)(out). Functionally, zinc-influx transporter which plays a role in zinc homeostasis and in the induction of epithelial-to-mesenchymal transition (EMT). When associated with SLC39A10, the heterodimer formed by SLC39A10 and SLC39A6 mediates cellular zinc uptake to trigger cells to undergo epithelial- to-mesenchymal transition (EMT). The SLC39A10-SLC39A6 heterodimer also controls NCAM1 phosphorylation and its integration into focal adhesion complexes during EMT. Zinc influx inactivates GSK3B, enabling unphosphorylated SNAI1 in the nucleus to down-regulate adherence genes such as CDH1, causing loss of cell adherence. In addition, the SLC39A10-SLC39A6 heterodimer plays an essentiel role in initiating mitosis by importing zinc into cells to initiate a pathway resulting in the onset of mitosis. Participates in the T-cell receptor signaling regulation by mediating cellular zinc uptake into activated lymphocytes. Regulates the zinc influx necessary for proper meiotic progression to metaphase II (MII) that allows the oocyte-to-egg transition. This is Zinc transporter ZIP6 from Pongo abelii (Sumatran orangutan).